Consider the following 531-residue polypeptide: T-complex protein 1 subunit zeta (531 aa).

Ala-2 is subject to N-acetylalanine. Lys-5 is subject to N6-acetyllysine. Gly-39 is a binding site for ADP. Gly-39 provides a ligand contact to ATP. Residue Asp-90 coordinates Mg(2+). ADP contacts are provided by Gly-91, Thr-92, Thr-93, Ser-94, Thr-158, and Lys-159. 3 residues coordinate ATP: Gly-91, Thr-92, and Thr-93. Lys-199 carries the post-translational modification N6-acetyllysine. Ser-205 bears the Phosphoserine mark. A Glycyl lysine isopeptide (Lys-Gly) (interchain with G-Cter in SUMO2) cross-link involves residue Lys-251. N6-acetyllysine occurs at positions 287, 365, 377, and 388. ADP is bound at residue Ala-411. Positions 411, 412, 496, and 501 each coordinate ATP. Asp-496 contacts ADP.

Belongs to the TCP-1 chaperonin family. Component of the chaperonin-containing T-complex (TRiC), a hexadecamer composed of two identical back-to-back stacked rings enclosing a protein folding chamber. Each ring is made up of eight different subunits: TCP1/CCT1, CCT2, CCT3, CCT4, CCT5, CCT6A/CCT6, CCT7, CCT8. Interacts with PACRG.

The protein resides in the cytoplasm. The enzyme catalyses ATP + H2O = ADP + phosphate + H(+). Functionally, component of the chaperonin-containing T-complex (TRiC), a molecular chaperone complex that assists the folding of actin, tubulin and other proteins upon ATP hydrolysis. The TRiC complex mediates the folding of WRAP53/TCAB1, thereby regulating telomere maintenance. The chain is T-complex protein 1 subunit zeta (CCT6A) from Bos taurus (Bovine).